A 354-amino-acid polypeptide reads, in one-letter code: DNA polymerase IV 2 (354 aa).

Residues 4 to 184 (IIHIDMDAFY…LPVKKFHGVG (181 aa)) enclose the UmuC domain. Residues Asp8 and Asp102 each contribute to the Mg(2+) site. Glu103 is a catalytic residue.

The protein belongs to the DNA polymerase type-Y family. Monomer. The cofactor is Mg(2+).

The protein localises to the cytoplasm. The enzyme catalyses DNA(n) + a 2'-deoxyribonucleoside 5'-triphosphate = DNA(n+1) + diphosphate. In terms of biological role, poorly processive, error-prone DNA polymerase involved in untargeted mutagenesis. Copies undamaged DNA at stalled replication forks, which arise in vivo from mismatched or misaligned primer ends. These misaligned primers can be extended by PolIV. Exhibits no 3'-5' exonuclease (proofreading) activity. May be involved in translesional synthesis, in conjunction with the beta clamp from PolIII. This Rhizobium meliloti (strain 1021) (Ensifer meliloti) protein is DNA polymerase IV 2 (dinB2).